We begin with the raw amino-acid sequence, 312 residues long: Olfactory receptor 5P4 (312 aa).

Residues 1–25 (METENDTMVTEFIILGLTDSATLRA) are Extracellular-facing. Residue Asn5 is glycosylated (N-linked (GlcNAc...) asparagine). Residues 26-46 (ILFVFFLPVYIVTVVGNISII) form a helical membrane-spanning segment. At 47 to 54 (LLIRSSPQ) the chain is on the cytoplasmic side. The helical transmembrane segment at 55–75 (LHTPMYLFLSHLAFVDIGYST) threads the bilayer. Topologically, residues 76-99 (SVTPIMLISFLREETTIPLAGCAA) are extracellular. A disulfide bridge links Cys97 with Cys189. A helical membrane pass occupies residues 100-120 (QLGSDVAFGTTECFLLATMAY). Topologically, residues 121-133 (DRYVAICSPLLYS) are cytoplasmic. Residues 134–154 (TQMSPAICCFLLGASYLGGCM) traverse the membrane as a helical segment. At 155-196 (NASSFTGCFVNLNFCGPNKVNHFFCDLFPLVKLSCGHAYIAE) the chain is on the extracellular side. The chain crosses the membrane as a helical span at residues 197 to 217 (ISPSISSASVLVSTLSTIIVS). Residues 218 to 237 (YIYILHSILRMRSAEGRNKA) lie on the Cytoplasmic side of the membrane. Residues 238–258 (FSTCTSHLTAVTLFYGTVLFV) traverse the membrane as a helical segment. Residues 259–271 (YVMPKSSYSADQV) lie on the Extracellular side of the membrane. The helical transmembrane segment at 272 to 292 (KVASVVYTVVIPMLNPLIYSL) threads the bilayer. The Cytoplasmic portion of the chain corresponds to 293–312 (RNKEVKEAMKKLMARTHWFP).

This sequence belongs to the G-protein coupled receptor 1 family.

It is found in the cell membrane. In terms of biological role, potential odorant receptor. The protein is Olfactory receptor 5P4 of Mus musculus (Mouse).